Consider the following 344-residue polypeptide: MLKVGIVGGTGYTGVELLRLLAQHPQVEVAVITSRSEAGVKVADMYPNLRGHYDGLAFSVPDSAVLGSCDVVFFATPHGVAHALAGELLAAGTRVIDLSADFRLQDAEEWARWYGQPHGAPELLPEAVYGLPEVNRERIRSARLIAVPGCYPTATQLGFLPLLESGLADNARLIADCKSGVSGAGRGAKVGSLFCEASESMMAYAVKGHRHLPEISQGLRRAAGGEVGLTFVPHLTPMIRGIHATLYASVADRSVDLQALYEKRYASEPFVDVMPAGSHPETRSVRGANVCRIAVHRPQGGDLVVVLSVIDNLVKGASGQAVQNMNILFGLDERLGLAHAALLP.

Residue Cys-150 is part of the active site.

Belongs to the NAGSA dehydrogenase family. Type 1 subfamily.

It is found in the cytoplasm. It catalyses the reaction N-acetyl-L-glutamate 5-semialdehyde + phosphate + NADP(+) = N-acetyl-L-glutamyl 5-phosphate + NADPH + H(+). It participates in amino-acid biosynthesis; L-arginine biosynthesis; N(2)-acetyl-L-ornithine from L-glutamate: step 3/4. In terms of biological role, catalyzes the NADPH-dependent reduction of N-acetyl-5-glutamyl phosphate to yield N-acetyl-L-glutamate 5-semialdehyde. The protein is N-acetyl-gamma-glutamyl-phosphate reductase of Azotobacter vinelandii (strain DJ / ATCC BAA-1303).